The following is a 117-amino-acid chain: Large ribosomal subunit protein eL34 (117 aa).

Belongs to the eukaryotic ribosomal protein eL34 family. Component of the large ribosomal subunit.

Its subcellular location is the cytoplasm. It localises to the cytosol. The protein resides in the endoplasmic reticulum. In terms of biological role, component of the large ribosomal subunit. The ribosome is a large ribonucleoprotein complex responsible for the synthesis of proteins in the cell. The chain is Large ribosomal subunit protein eL34 (rpl34) from Danio rerio (Zebrafish).